Reading from the N-terminus, the 779-residue chain is Endonuclease MutS2 (779 aa).

An ATP-binding site is contributed by 328-335; sequence GPNTGGKT. The region spanning 704–779 is the Smr domain; the sequence is LDLRGKRYEE…GSGATIVTLG (76 aa).

Belongs to the DNA mismatch repair MutS family. MutS2 subfamily. In terms of assembly, homodimer. Binds to stalled ribosomes, contacting rRNA.

Functionally, endonuclease that is involved in the suppression of homologous recombination and thus may have a key role in the control of bacterial genetic diversity. Its function is as follows. Acts as a ribosome collision sensor, splitting the ribosome into its 2 subunits. Detects stalled/collided 70S ribosomes which it binds and splits by an ATP-hydrolysis driven conformational change. Acts upstream of the ribosome quality control system (RQC), a ribosome-associated complex that mediates the extraction of incompletely synthesized nascent chains from stalled ribosomes and their subsequent degradation. Probably generates substrates for RQC. The sequence is that of Endonuclease MutS2 from Streptococcus agalactiae serotype Ia (strain ATCC 27591 / A909 / CDC SS700).